The chain runs to 322 residues: 4-hydroxythreonine-4-phosphate dehydrogenase (322 aa).

Thr132 is a binding site for substrate. A divalent metal cation contacts are provided by His160, His205, and His260. Residues Lys268, Asn277, and Arg286 each coordinate substrate.

This sequence belongs to the PdxA family. As to quaternary structure, homodimer. Zn(2+) serves as cofactor. Mg(2+) is required as a cofactor. Requires Co(2+) as cofactor.

The protein resides in the cytoplasm. It catalyses the reaction 4-(phosphooxy)-L-threonine + NAD(+) = 3-amino-2-oxopropyl phosphate + CO2 + NADH. Its pathway is cofactor biosynthesis; pyridoxine 5'-phosphate biosynthesis; pyridoxine 5'-phosphate from D-erythrose 4-phosphate: step 4/5. Catalyzes the NAD(P)-dependent oxidation of 4-(phosphooxy)-L-threonine (HTP) into 2-amino-3-oxo-4-(phosphooxy)butyric acid which spontaneously decarboxylates to form 3-amino-2-oxopropyl phosphate (AHAP). This chain is 4-hydroxythreonine-4-phosphate dehydrogenase, found in Xanthomonas oryzae pv. oryzae (strain PXO99A).